The chain runs to 422 residues: Phagosome assembly factor 1 (422 aa).

It belongs to the PHAF1 family. As to quaternary structure, interacts with BCAS3; the interaction is requrired for the association with the phagophore.

It localises to the cytoplasm. Its subcellular location is the preautophagosomal structure. Its function is as follows. Plays a regulatory role in autophagic activity. In complex with BCAS3, associates with the autophagosome formation site during both non-selective and selective autophagy. In Rattus norvegicus (Rat), this protein is Phagosome assembly factor 1 (Phaf1).